The primary structure comprises 215 residues: Ras-related protein Rab-5A (215 aa).

The GTP site is built by serine 29, alanine 30, glycine 32, lysine 33, serine 34, serine 35, histidine 46, glutamate 47, threonine 52, and glycine 78. Residue serine 34 coordinates Mg(2+). 2 consecutive short sequence motifs (switch) follow at residues 44–56 (QFHEFQESTIGAA) and 77–93 (AGQERYHSLAPMYYRGA). A Mg(2+)-binding site is contributed by threonine 52. Serine 84 carries the post-translational modification Phosphoserine. GTP contacts are provided by asparagine 133, lysine 134, aspartate 136, alanine 164, and lysine 165. The segment at 181-215 (LPKNEPQNPGANSARGRGVDLTEPAQPARSQCCSN) is disordered. S-geranylgeranyl cysteine attachment occurs at residues cysteine 212 and cysteine 213.

Belongs to the small GTPase superfamily. Rab family. Interacts with GDI1; this promotes dissociation from membranes; phosphorylation at Ser-84 disrupts this interaction. Interacts with GDI2; phosphorylation at Ser-84 disrupts the interaction. Interacts with EEA1. Interacts with RIN1 and GAPVD1, which regulate its pathway, probably by acting as a GEF. Interacts with RINL. Interacts with ALS2CL, SUN2, ZFYVE20 and RUFY1. Interacts with RABEP1; one RABEP1 homodimer binds two RAB5A chains, but at opposite sides of the dimer. Interacts with SGSM1 and SGSM3. Interacts with PIK3CB. Interacts with OCRL and INPP5F. May be a component of a complex composed of RAB5A, DYN2 and PIK3C3. Does not interact with BLOC-3 complex (heterodimer of HPS1 and HPS4). Interacts with CLN5. Interacts with APPL2. Interacts with F8A1/F8A2/F8A3. Found in a complex with F8A1/F8A2/F8A3, HTT and RAB5A; mediates the recruitment of HTT by RAB5A onto early endosomes. Interacts with ATP9A. Interacts with PPP1R21; mediates the recruitment of FERRY complex by RAB5A onto early endosomes. It depends on Mg(2+) as a cofactor. In terms of processing, phosphorylation of Ser-84 in the switch II region by LRRK2 prevents the association of RAB regulatory proteins, including RAB GDP dissociation inhibitors GDI1 and GDI2.

It is found in the cell membrane. It localises to the early endosome membrane. Its subcellular location is the melanosome. The protein localises to the cytoplasmic vesicle. The protein resides in the cell projection. It is found in the ruffle. It localises to the membrane. Its subcellular location is the cytoplasm. The protein localises to the cytosol. The protein resides in the phagosome membrane. It is found in the endosome membrane. The catalysed reaction is GTP + H2O = GDP + phosphate + H(+). With respect to regulation, regulated by guanine nucleotide exchange factors (GEFs) including RINL, which promote the exchange of bound GDP for free GTP. Regulated by GTPase activating proteins (GAPs) which increase the GTP hydrolysis activity. Inhibited by GDP dissociation inhibitors (GDIs). Its function is as follows. The small GTPases Rab are key regulators of intracellular membrane trafficking, from the formation of transport vesicles to their fusion with membranes. Rabs cycle between an inactive GDP-bound form and an active GTP-bound form that is able to recruit to membranes different sets of downstream effectors directly responsible for vesicle formation, movement, tethering and fusion. RAB5A is required for the fusion of plasma membranes and early endosomes. Contributes to the regulation of filopodia extension. Required for the exosomal release of SDCBP, CD63, PDCD6IP and syndecan. Regulates maturation of apoptotic cell-containing phagosomes, probably downstream of DYN2 and PIK3C3. This Mus musculus (Mouse) protein is Ras-related protein Rab-5A.